A 495-amino-acid chain; its full sequence is UDP-glycosyltransferase 73C25 (495 aa).

UDP-alpha-D-glucose is bound at residue 23-26 (GHMI). Residue H24 is the Proton acceptor of the active site. D129 (charge relay) is an active-site residue. Residues 355 to 358 (WSPQ), 373 to 381 (HCGWNSTLE), and 397 to 398 (DQ) contribute to the UDP-alpha-D-glucose site.

Belongs to the UDP-glycosyltransferase family.

Functionally, catalyzes the transfer of a glucose (Glc) moiety from UDP-Glc to the C-28 carboxylic group of oleanolate 3-O-beta-D-glucoside to form oleanolate 3,28-O-beta-D-diglucoside. This is UDP-glycosyltransferase 73C25 from Barbarea vulgaris (Yellow rocket).